The sequence spans 459 residues: Cysteine--tRNA ligase (459 aa).

Cysteine 27 is a binding site for Zn(2+). The 'HIGH' region motif lies at 29 to 39 (PTVYNFVHIGN). Residues cysteine 211, histidine 236, and glutamate 240 each coordinate Zn(2+). Positions 269-273 (KMSKS) match the 'KMSKS' region motif. Residue lysine 272 coordinates ATP.

This sequence belongs to the class-I aminoacyl-tRNA synthetase family. In terms of assembly, monomer. Zn(2+) serves as cofactor.

The protein localises to the cytoplasm. The catalysed reaction is tRNA(Cys) + L-cysteine + ATP = L-cysteinyl-tRNA(Cys) + AMP + diphosphate. In Ehrlichia canis (strain Jake), this protein is Cysteine--tRNA ligase.